The sequence spans 204 residues: Recombination protein RecR (204 aa).

The C4-type zinc finger occupies 58 to 75 (CSVCQNITDLGVDPCHIC). Residues 83–181 (SVICVVESPT…NVTRIARGIP (99 aa)) enclose the Toprim domain.

This sequence belongs to the RecR family.

Its function is as follows. May play a role in DNA repair. It seems to be involved in an RecBC-independent recombinational process of DNA repair. It may act with RecF and RecO. In Chlorobaculum tepidum (strain ATCC 49652 / DSM 12025 / NBRC 103806 / TLS) (Chlorobium tepidum), this protein is Recombination protein RecR.